We begin with the raw amino-acid sequence, 214 residues long: Adenylate kinase (214 aa).

10 to 15 (GAGKGT) serves as a coordination point for ATP. Residues 30-59 (STGDMFRAAVKNETPLGLEAKSYMDKGHLV) are NMP. AMP is bound by residues threonine 31, arginine 36, 57-59 (HLV), 85-88 (GFPR), and glutamine 92. The interval 126–163 (GRWICPVCGASYHTMFNPPKEAGVCDKDGGKLYQREDD) is LID. Arginine 127 is a binding site for ATP. Cysteine 130 and cysteine 133 together coordinate Zn(2+). An ATP-binding site is contributed by 136–137 (SY). Zn(2+) is bound by residues cysteine 150 and aspartate 153. 2 residues coordinate AMP: arginine 160 and arginine 171. An ATP-binding site is contributed by glutamine 199.

Belongs to the adenylate kinase family. In terms of assembly, monomer.

The protein resides in the cytoplasm. It carries out the reaction AMP + ATP = 2 ADP. It functions in the pathway purine metabolism; AMP biosynthesis via salvage pathway; AMP from ADP: step 1/1. Its function is as follows. Catalyzes the reversible transfer of the terminal phosphate group between ATP and AMP. Plays an important role in cellular energy homeostasis and in adenine nucleotide metabolism. The protein is Adenylate kinase of Brevibacillus brevis (strain 47 / JCM 6285 / NBRC 100599).